The sequence spans 496 residues: Glycerol kinase (496 aa).

Residue threonine 11 coordinates ADP. Residues threonine 11, threonine 12, and serine 13 each coordinate ATP. A sn-glycerol 3-phosphate-binding site is contributed by threonine 11. Arginine 15 provides a ligand contact to ADP. 4 residues coordinate sn-glycerol 3-phosphate: arginine 81, glutamate 82, tyrosine 133, and aspartate 242. 5 residues coordinate glycerol: arginine 81, glutamate 82, tyrosine 133, aspartate 242, and glutamine 243. ADP-binding residues include threonine 264 and glycine 307. 4 residues coordinate ATP: threonine 264, glycine 307, glutamine 311, and glycine 408. 2 residues coordinate ADP: glycine 408 and asparagine 412.

Belongs to the FGGY kinase family.

The catalysed reaction is glycerol + ATP = sn-glycerol 3-phosphate + ADP + H(+). The protein operates within polyol metabolism; glycerol degradation via glycerol kinase pathway; sn-glycerol 3-phosphate from glycerol: step 1/1. Inhibited by fructose 1,6-bisphosphate (FBP). Key enzyme in the regulation of glycerol uptake and metabolism. Catalyzes the phosphorylation of glycerol to yield sn-glycerol 3-phosphate. The chain is Glycerol kinase from Trichlorobacter lovleyi (strain ATCC BAA-1151 / DSM 17278 / SZ) (Geobacter lovleyi).